The sequence spans 1358 residues: Xanthine dehydrogenase (1358 aa).

A 2Fe-2S ferredoxin-type domain is found at 18 to 107; the sequence is NQLLFFLNGE…GMAVTTIEGL (90 aa). 8 residues coordinate [2Fe-2S] cluster: C56, C61, C64, C89, C129, C132, C164, and C166. The 195-residue stretch at 253-447 folds into the FAD-binding PCMH-type domain; it reads FTGSRVTWYT…ESVFIPYTRP (195 aa). FAD is bound by residues 281–288, F366, 376–380, D389, L437, and K455; these read IVVGNTEI and SIGGN. Mo-molybdopterin contacts are provided by Q805 and F836. Substrate-binding residues include E840 and R918. R950 contributes to the Mo-molybdopterin binding site. The substrate site is built by Y952 and T1048. A1117 serves as a coordination point for Mo-molybdopterin. E1302 functions as the Proton acceptor in the catalytic mechanism.

It belongs to the xanthine dehydrogenase family. Homodimer. Requires FAD as cofactor. Mo-molybdopterin serves as cofactor. The cofactor is [2Fe-2S] cluster.

The protein localises to the peroxisome. It carries out the reaction xanthine + NAD(+) + H2O = urate + NADH + H(+). The catalysed reaction is hypoxanthine + NAD(+) + H2O = xanthine + NADH + H(+). Functionally, key enzyme in purine degradation. Catalyzes the oxidation of hypoxanthine to xanthine. Catalyzes the oxidation of xanthine to uric acid. The polypeptide is Xanthine dehydrogenase (xdh) (Dictyostelium discoideum (Social amoeba)).